A 435-amino-acid polypeptide reads, in one-letter code: Tyrosine-protein phosphatase non-receptor type 1 (435 aa).

N-acetylmethionine is present on M1. The Tyrosine-protein phosphatase domain occupies 3 to 277; that stretch reads MEKEFEQIDK…RFSYLAVIEG (275 aa). Residue Y20 is modified to Phosphotyrosine. S50 is subject to Phosphoserine; by PKB/AKT1, CLK1 and CLK2. Y66 carries the phosphotyrosine; by EGFR modification. Substrate contacts are provided by residues D181 and 215–221; that span reads CSAGIGR. Catalysis depends on C215, which acts as the Phosphocysteine intermediate. C215 is subject to Cysteine persulfide; alternate. Residue C215 is modified to Cysteine sulfenic acid (-SOH); alternate. A Cysteine sulfinic acid (-SO2H); alternate modification is found at C215. At C215 the chain carries S-nitrosocysteine; in reversibly inhibited form. The segment at residues 215 to 216 is a cross-link (n,N-(cysteine-1,S-diyl)serine (Cys-Ser); in inhibited form); sequence CS. A phosphoserine; by CLK1 and CLK2 mark is found at S242 and S243. Residue Q262 participates in substrate binding. The segment covering 338–351 has biased composition (basic and acidic residues); sequence TQEDKDCPIKEEKG. Positions 338 to 359 are disordered; that stretch reads TQEDKDCPIKEEKGSPLNAAPY. Phosphoserine occurs at positions 352, 363, and 365. T368 carries the phosphothreonine modification. S378 bears the Phosphoserine; by PKC mark. Residues 378 to 398 are disordered; that stretch reads SLRGAQAASPAKGEPSLPEKD. S386 bears the Phosphoserine; by CDK1 mark.

This sequence belongs to the protein-tyrosine phosphatase family. Non-receptor class 1 subfamily. In terms of assembly, interacts with EPHA3 (phosphorylated); dephosphorylates EPHA3 and may regulate its trafficking and function. Interacts with MET. Interacts with NCK1. Post-translationally, oxidized on Cys-215; the Cys-SOH formed in response to redox signaling reacts with the alpha-amido of the following residue to form a sulfenamide cross-link, triggering a conformational change that inhibits substrate binding and activity. The active site can be restored by reduction. Ser-50 is the major site of phosphorylation as compared to Ser-242 and Ser-243. Activated by phosphorylation at Ser-50. In terms of processing, S-nitrosylation of Cys-215 inactivates the enzyme activity. Post-translationally, sulfhydration at Cys-215 following endoplasmic reticulum stress inactivates the enzyme activity, promoting EIF2AK3/PERK activity. As to expression, expressed in keratinocytes (at protein level).

Its subcellular location is the endoplasmic reticulum membrane. The enzyme catalyses O-phospho-L-tyrosyl-[protein] + H2O = L-tyrosyl-[protein] + phosphate. In terms of biological role, tyrosine-protein phosphatase which acts as a regulator of endoplasmic reticulum unfolded protein response. Mediates dephosphorylation of EIF2AK3/PERK; inactivating the protein kinase activity of EIF2AK3/PERK. May play an important role in CKII- and p60c-src-induced signal transduction cascades. May regulate the EFNA5-EPHA3 signaling pathway which modulates cell reorganization and cell-cell repulsion. May also regulate the hepatocyte growth factor receptor signaling pathway through dephosphorylation of MET. The sequence is that of Tyrosine-protein phosphatase non-receptor type 1 (PTPN1) from Homo sapiens (Human).